The sequence spans 840 residues: Subtilisin-like protease SBT2.3 (840 aa).

Positions 1-27 are cleaved as a signal peptide; that stretch reads MVRVMLVRFGFLLLMISFVFLSNNTLG. A propeptide spans 28-146 (activation peptide); it reads QQQDDDDDSA…IVLDYSVRTA (119 aa). Positions 38–146 constitute an Inhibitor I9 domain; that stretch reads VYIVTLKQPP…IVLDYSVRTA (109 aa). Residues 61–81 are compositionally biased toward basic residues; that stretch reads KSKFTPKLRPRNNSRKRHGKS. The segment at 61-85 is disordered; the sequence is KSKFTPKLRPRNNSRKRHGKSKIPS. Asn-72 carries N-linked (GlcNAc...) asparagine glycosylation. Residues 148 to 694 enclose the Peptidase S8 domain; that stretch reads TYTPQFMGLP…SGFVNATAAL (547 aa). Asp-180 serves as the catalytic Charge relay system. N-linked (GlcNAc...) asparagine glycans are attached at residues Asn-193 and Asn-241. The active-site Charge relay system is the His-255. Residues Asn-398, Asn-427, Asn-480, Asn-525, and Asn-553 are each glycosylated (N-linked (GlcNAc...) asparagine). A PA domain is found at 418 to 513; it reads MISAFHALNN…MDMPGIIIPS (96 aa). Ser-619 acts as the Charge relay system in catalysis. N-linked (GlcNAc...) asparagine glycosylation is found at Asn-689, Asn-715, Asn-723, Asn-767, and Asn-808.

The protein belongs to the peptidase S8 family.

The protein localises to the secreted. The chain is Subtilisin-like protease SBT2.3 from Arabidopsis thaliana (Mouse-ear cress).